Reading from the N-terminus, the 91-residue chain is uncharacterized protein (91 aa).

An N-terminal signal peptide occupies residues 1–18 (MKVNLILFSLFLLVSIMA). C19 carries N-palmitoyl cysteine lipidation. A lipid anchor (S-diacylglycerol cysteine) is attached at C19.

The protein resides in the cell membrane. This is an uncharacterized protein from Escherichia coli (strain K12).